The sequence spans 587 residues: Methylcrotonoyl-CoA carboxylase beta chain, mitochondrial (587 aa).

The transit peptide at 1–26 directs the protein to the mitochondrion; sequence MLRILGRRVVSASKELTSIQQWRIRP. The region spanning 68-324 is the CoA carboxyltransferase N-terminal domain; sequence MEGILSELRS…AAKQGMEGTF (257 aa). Residues 68–579 form a carboxyltransferase region; it reads MEGILSELRS…SAALNRPLED (512 aa). A CoA carboxyltransferase C-terminal domain is found at 333-579; that stretch reads EPLYDINELR…SAALNRPLED (247 aa). The segment at 367 to 396 is acyl-CoA binding; the sequence is EFDEFKKQYGTTLVTGFARIYGQTVGIIGN.

It belongs to the AccD/PCCB family. As to quaternary structure, probably a heterodimer composed of biotin-containing alpha subunits and beta subunits. In roots, cotyledons, leaves, flowers, ovaries, siliques and embryos.

It localises to the mitochondrion matrix. It carries out the reaction 3-methylbut-2-enoyl-CoA + hydrogencarbonate + ATP = 3-methyl-(2E)-glutaconyl-CoA + ADP + phosphate + H(+). It functions in the pathway amino-acid degradation; L-leucine degradation; (S)-3-hydroxy-3-methylglutaryl-CoA from 3-isovaleryl-CoA: step 2/3. Carboxyltransferase subunit of the 3-methylcrotonyl-CoA carboxylase, an enzyme that catalyzes the conversion of 3-methylcrotonyl-CoA to 3-methylglutaconyl-CoA, a critical step for leucine and isovaleric acid catabolism. The polypeptide is Methylcrotonoyl-CoA carboxylase beta chain, mitochondrial (MCCB) (Arabidopsis thaliana (Mouse-ear cress)).